The following is a 392-amino-acid chain: Chaperone protein DnaJ (392 aa).

The J domain occupies 2–67; the sequence is DYYTILGVAK…QKRESYDRYG (66 aa). The segment at 149-227 adopts a CR-type zinc-finger fold; the sequence is GVEKELLVSG…CRGQGRIKDK (79 aa). Residues cysteine 162, cysteine 165, cysteine 179, cysteine 182, cysteine 201, cysteine 204, cysteine 215, and cysteine 218 each contribute to the Zn(2+) site. 4 CXXCXGXG motif repeats span residues 162–169, 179–186, 201–208, and 215–222; these read CDACSGSG, CDRCKGSG, CPDCSGEG, and CSVCRGQG.

Belongs to the DnaJ family. Homodimer. Zn(2+) is required as a cofactor.

It is found in the cytoplasm. In terms of biological role, participates actively in the response to hyperosmotic and heat shock by preventing the aggregation of stress-denatured proteins and by disaggregating proteins, also in an autonomous, DnaK-independent fashion. Unfolded proteins bind initially to DnaJ; upon interaction with the DnaJ-bound protein, DnaK hydrolyzes its bound ATP, resulting in the formation of a stable complex. GrpE releases ADP from DnaK; ATP binding to DnaK triggers the release of the substrate protein, thus completing the reaction cycle. Several rounds of ATP-dependent interactions between DnaJ, DnaK and GrpE are required for fully efficient folding. Also involved, together with DnaK and GrpE, in the DNA replication of plasmids through activation of initiation proteins. This chain is Chaperone protein DnaJ, found in Chlamydia trachomatis serovar L2 (strain ATCC VR-902B / DSM 19102 / 434/Bu).